The following is a 430-amino-acid chain: Serine hydroxymethyltransferase (430 aa).

(6S)-5,6,7,8-tetrahydrofolate is bound at residue 120-122; it reads GHI. N6-(pyridoxal phosphate)lysine is present on K226.

The protein belongs to the SHMT family. In terms of assembly, homodimer. Pyridoxal 5'-phosphate serves as cofactor.

It localises to the cytoplasm. It functions in the pathway amino-acid biosynthesis; glycine biosynthesis; glycine from L-serine: step 1/1. Functionally, catalyzes the reversible interconversion of serine and glycine with a modified folate serving as the one-carbon carrier. Also exhibits a pteridine-independent aldolase activity toward beta-hydroxyamino acids, producing glycine and aldehydes, via a retro-aldol mechanism. The chain is Serine hydroxymethyltransferase from Pyrobaculum aerophilum (strain ATCC 51768 / DSM 7523 / JCM 9630 / CIP 104966 / NBRC 100827 / IM2).